Here is a 263-residue protein sequence, read N- to C-terminus: Probable esterase PIR7A (263 aa).

The Acyl-ester intermediate role is filled by S82. Active-site charge relay system residues include D213 and H241.

This sequence belongs to the AB hydrolase superfamily.

The sequence is that of Probable esterase PIR7A (PIR7A) from Oryza sativa subsp. indica (Rice).